The following is a 188-amino-acid chain: UPF0301 protein Mmwyl1_0539 (188 aa).

This sequence belongs to the UPF0301 (AlgH) family.

In Marinomonas sp. (strain MWYL1), this protein is UPF0301 protein Mmwyl1_0539.